A 226-amino-acid polypeptide reads, in one-letter code: Exopolysaccharide production protein ExoY (226 aa).

Residues 34–54 (VLIAILALIALSPLFLLVMGL) form a helical membrane-spanning segment.

Belongs to the bacterial sugar transferase family.

It is found in the cell membrane. The protein operates within glycan metabolism; exopolysaccharide biosynthesis. In terms of biological role, needed for the addition of the first sugar (galactose) to the isoprenoid carrier. May function as a sugar transferase. The chain is Exopolysaccharide production protein ExoY (exoY) from Sinorhizobium fredii (strain NBRC 101917 / NGR234).